The sequence spans 245 residues: Small ribosomal subunit protein uS2 (245 aa).

Belongs to the universal ribosomal protein uS2 family.

This chain is Small ribosomal subunit protein uS2, found in Pseudomonas putida (strain GB-1).